The chain runs to 146 residues: D-aminoacyl-tRNA deacylase (146 aa).

Residues 137–138 (GP) carry the Gly-cisPro motif, important for rejection of L-amino acids motif.

This sequence belongs to the DTD family. Homodimer.

Its subcellular location is the cytoplasm. The enzyme catalyses glycyl-tRNA(Ala) + H2O = tRNA(Ala) + glycine + H(+). It catalyses the reaction a D-aminoacyl-tRNA + H2O = a tRNA + a D-alpha-amino acid + H(+). An aminoacyl-tRNA editing enzyme that deacylates mischarged D-aminoacyl-tRNAs. Also deacylates mischarged glycyl-tRNA(Ala), protecting cells against glycine mischarging by AlaRS. Acts via tRNA-based rather than protein-based catalysis; rejects L-amino acids rather than detecting D-amino acids in the active site. By recycling D-aminoacyl-tRNA to D-amino acids and free tRNA molecules, this enzyme counteracts the toxicity associated with the formation of D-aminoacyl-tRNA entities in vivo and helps enforce protein L-homochirality. The protein is D-aminoacyl-tRNA deacylase of Bacillus thuringiensis (strain Al Hakam).